A 120-amino-acid polypeptide reads, in one-letter code: Spermidine export protein MdtJ (120 aa).

A run of 4 helical transmembrane segments spans residues 1 to 21, 31 to 51, 54 to 74, and 81 to 101; these read MFYW…TLSM, AGFI…SFAV, IALG…ITIF, and EALS…IVLI.

It belongs to the drug/metabolite transporter (DMT) superfamily. Small multidrug resistance (SMR) (TC 2.A.7.1) family. MdtJ subfamily. In terms of assembly, forms a complex with MdtI.

The protein localises to the cell inner membrane. Functionally, catalyzes the excretion of spermidine. In Salmonella agona (strain SL483), this protein is Spermidine export protein MdtJ.